The sequence spans 160 residues: uncharacterized protein (160 aa).

A helical transmembrane segment spans residues 47 to 67; it reads LLGGFANVAAILTPLVAVLAY.

Its subcellular location is the membrane. This is an uncharacterized protein from Sinorhizobium fredii (strain NBRC 101917 / NGR234).